A 520-amino-acid chain; its full sequence is GMP synthase [glutamine-hydrolyzing] (520 aa).

The 194-residue stretch at 9-202 (SVLIIDFGSQ…VHNIAGITGD (194 aa)) folds into the Glutamine amidotransferase type-1 domain. The active-site Nucleophile is the cysteine 86. Active-site residues include histidine 176 and glutamate 178. A GMPS ATP-PPase domain is found at 203–395 (WSMSAYRAKA…LGLPDSFIGR (193 aa)). 230–236 (SGGVDSS) is a binding site for ATP.

Homodimer.

The enzyme catalyses XMP + L-glutamine + ATP + H2O = GMP + L-glutamate + AMP + diphosphate + 2 H(+). It functions in the pathway purine metabolism; GMP biosynthesis; GMP from XMP (L-Gln route): step 1/1. Functionally, catalyzes the synthesis of GMP from XMP. In Allorhizobium ampelinum (strain ATCC BAA-846 / DSM 112012 / S4) (Agrobacterium vitis (strain S4)), this protein is GMP synthase [glutamine-hydrolyzing].